Consider the following 189-residue polypeptide: Glucose-6-phosphate isomerase (189 aa).

Residues H88, H90, E97, and H136 each coordinate Fe cation.

It belongs to the archaeal-type GPI family. Homodimer.

It is found in the cytoplasm. It carries out the reaction alpha-D-glucose 6-phosphate = beta-D-fructose 6-phosphate. It functions in the pathway carbohydrate degradation; glycolysis; D-glyceraldehyde 3-phosphate and glycerone phosphate from D-glucose: step 2/4. The protein is Glucose-6-phosphate isomerase of Thermococcus gammatolerans (strain DSM 15229 / JCM 11827 / EJ3).